Consider the following 311-residue polypeptide: Probable manganese-dependent inorganic pyrophosphatase (311 aa).

Mn(2+) contacts are provided by His-9, Asp-13, Asp-15, Asp-77, His-99, and Asp-151.

This sequence belongs to the PPase class C family. Homodimer. Requires Mn(2+) as cofactor.

The protein localises to the cytoplasm. It catalyses the reaction diphosphate + H2O = 2 phosphate + H(+). The polypeptide is Probable manganese-dependent inorganic pyrophosphatase (ppaC) (Streptococcus gordonii (strain Challis / ATCC 35105 / BCRC 15272 / CH1 / DL1 / V288)).